The sequence spans 581 residues: MARVYMETMIQKCVSFSQIKQLQSHFLTAGHFQSSFLRSRLLERCAISPFGDLSFAVQIFRYIPKPLTNDWNAIIRGFAGSSHPSLAFSWYRSMLQQSSSSSAICRVDALTCSFTLKACARALCSSAMDQLHCQINRRGLSADSLLCTTLLDAYSKNGDLISAYKLFDEMPVRDVASWNALIAGLVSGNRASEAMELYKRMETEGIRRSEVTVVAALGACSHLGDVKEGENIFHGYSNDNVIVSNAAIDMYSKCGFVDKAYQVFEQFTGKKSVVTWNTMITGFAVHGEAHRALEIFDKLEDNGIKPDDVSYLAALTACRHAGLVEYGLSVFNNMACKGVERNMKHYGCVVDLLSRAGRLREAHDIICSMSMIPDPVLWQSLLGASEIYSDVEMAEIASREIKEMGVNNDGDFVLLSNVYAAQGRWKDVGRVRDDMESKQVKKIPGLSYIEAKGTIHEFYNSDKSHEQWREIYEKIDEIRFKIREDGYVAQTGLVLHDIGEEEKENALCYHSEKLAVAYGLMMMDGADEESPVRVINNLRICGDCHVVFKHISKIYKREIIVRDRVRFHRFKDGSCSCRDFW.

PPR repeat units follow at residues 67–101 (LTNDWNAIIRGFAGSSHPSLAFSWYRSMLQQSSSS), 108–142 (DALTCSFTLKACARALCSSAMDQLHCQINRRGLSA), 143–173 (DSLLCTTLLDAYSKNGDLISAYKLFDEMPVR), 174–208 (DVASWNALIAGLVSGNRASEAMELYKRMETEGIRR), 209–239 (SEVTVVAALGACSHLGDVKEGENIFHGYSND), 240–270 (NVIVSNAAIDMYSKCGFVDKAYQVFEQFTGK), 272–306 (SVVTWNTMITGFAVHGEAHRALEIFDKLEDNGIKP), 307–341 (DDVSYLAALTACRHAGLVEYGLSVFNNMACKGVER), and 342–372 (NMKHYGCVVDLLSRAGRLREAHDIICSMSMI). A type E motif region spans residues 377-452 (LWQSLLGASE…IPGLSYIEAK (76 aa)). The tract at residues 453–483 (GTIHEFYNSDKSHEQWREIYEKIDEIRFKIR) is type E(+) motif. A type DYW motif region spans residues 484–581 (EDGYVAQTGL…DGSCSCRDFW (98 aa)).

This sequence belongs to the PPR family. PCMP-H subfamily.

This is Pentatricopeptide repeat-containing protein At1g34160 (PCMP-H68) from Arabidopsis thaliana (Mouse-ear cress).